A 691-amino-acid polypeptide reads, in one-letter code: Two-component response regulator ORR21 (691 aa).

The Response regulatory domain occupies 17-132 (KVLVVDDDPT…ELKNIWQHVI (116 aa)). Asp68 is subject to 4-aspartylphosphate. Over residues 139–155 (NKEHEHSGSLDDTDRTR) the composition is skewed to basic and acidic residues. The segment at 139-204 (NKEHEHSGSL…DPSSTSKKPR (66 aa)) is disordered. Residues 199 to 258 (TSKKPRVVWSVELHQQFVNAVNHLGIDKAVPKKILELMNVPGLTRENVASHLQKFRLYLK) constitute a DNA-binding region (myb-like GARP).

The protein belongs to the ARR family. Type-B subfamily. Two-component system major event consists of a His-to-Asp phosphorelay between a sensor histidine kinase (HK) and a response regulator (RR). In plants, the His-to-Asp phosphorelay involves an additional intermediate named Histidine-containing phosphotransfer protein (HPt). This multistep phosphorelay consists of a His-Asp-His-Asp sequential transfer of a phosphate group between first a His and an Asp of the HK protein, followed by the transfer to a conserved His of the HPt protein and finally the transfer to an Asp in the receiver domain of the RR protein.

The protein resides in the nucleus. In terms of biological role, transcriptional activator that binds specific DNA sequence. Functions as a response regulator involved in His-to-Asp phosphorelay signal transduction system. Phosphorylation of the Asp residue in the receiver domain activates the ability of the protein to promote the transcription of target genes. May directly activate some type-A response regulators in response to cytokinins. The protein is Two-component response regulator ORR21 of Oryza sativa subsp. japonica (Rice).